A 244-amino-acid polypeptide reads, in one-letter code: 3-oxoacyl-[acyl-carrier-protein] reductase FabG (244 aa).

NADP(+) is bound by residues 12–15 (GASR) and threonine 37. The Ca(2+) site is built by glycine 50 and glycine 53. Residues 59-60 (NV) and asparagine 86 each bind NADP(+). Residue serine 138 participates in substrate binding. Asparagine 145 lines the Ca(2+) pocket. The active-site Proton acceptor is the tyrosine 151. Residues 151-155 (YAAAK) and isoleucine 184 each bind NADP(+). Positions 233 and 234 each coordinate Ca(2+).

It belongs to the short-chain dehydrogenases/reductases (SDR) family. In terms of assembly, homotetramer.

The enzyme catalyses a (3R)-hydroxyacyl-[ACP] + NADP(+) = a 3-oxoacyl-[ACP] + NADPH + H(+). The catalysed reaction is 3-oxobutanoyl-[ACP] + NADPH + H(+) = (3R)-hydroxybutanoyl-[ACP] + NADP(+). It carries out the reaction 3-oxopentanoyl-[ACP] + NADPH + H(+) = (3R)-hydroxypentanoyl-[ACP] + NADP(+). It catalyses the reaction 3-oxohexanoyl-[ACP] + NADPH + H(+) = (3R)-hydroxyhexanoyl-[ACP] + NADP(+). The enzyme catalyses 3-oxoheptanoyl-[ACP] + NADPH + H(+) = (3R)-hydroxyheptanoyl-[ACP] + NADP(+). The catalysed reaction is 3-oxooctanoyl-[ACP] + NADPH + H(+) = (3R)-hydroxyoctanoyl-[ACP] + NADP(+). It carries out the reaction 3-oxononanoyl-[ACP] + NADPH + H(+) = (3R)-hydroxynonanoyl-[ACP] + NADP(+). It catalyses the reaction 3-oxodecanoyl-[ACP] + NADPH + H(+) = (3R)-hydroxydecanoyl-[ACP] + NADP(+). The enzyme catalyses 3-oxohexadecanoyl-[ACP] + NADPH + H(+) = (3R)-hydroxyhexadecanoyl-[ACP] + NADP(+). The catalysed reaction is 3-oxo-(9Z)-hexadecenoyl-[ACP] + NADPH + H(+) = (3R)-hydroxy-(9Z)-hexadecenoyl-[ACP] + NADP(+). It carries out the reaction 4-methyl-3-oxopentanoyl-[ACP] + NADPH + H(+) = (3R)-hydroxy-4-methylpentanoyl-[ACP] + NADP(+). It catalyses the reaction 5-methyl-3-oxohexanoyl-[ACP] + NADPH + H(+) = (3R)-hydroxy-5-methylhexanoyl-[ACP] + NADP(+). The enzyme catalyses 4-methyl-3-oxohexanoyl-[ACP] + NADPH + H(+) = (3R)-hydroxy-4-methylhexanoyl-[ACP] + NADP(+). It functions in the pathway lipid metabolism; fatty acid biosynthesis. With respect to regulation, inhibited by cinnamic acid derivatives. Functionally, catalyzes the NADPH-dependent reduction of beta-ketoacyl-ACP substrates to beta-hydroxyacyl-ACP products, the first reductive step in the elongation cycle of fatty acid biosynthesis. The sequence is that of 3-oxoacyl-[acyl-carrier-protein] reductase FabG (fabG) from Escherichia coli (strain K12).